A 564-amino-acid polypeptide reads, in one-letter code: Malignant brain tumor repeat protein 1 (564 aa).

4 MBT repeats span residues 64–176 (FTWS…MKWL), 205–327 (RPTE…TKAT), 331–442 (LEHS…LDRL), and 450–549 (FKWE…LRHP).

In terms of assembly, interacts with histone H3 that is trimethylated at 'Lys-9' (H3K9me3).

The chain is Malignant brain tumor repeat protein 1 (mbtr-1) from Caenorhabditis elegans.